Here is a 558-residue protein sequence, read N- to C-terminus: Ubiquitin carboxyl-terminal hydrolase 30 homolog (558 aa).

The chain crosses the membrane as a helical span at residues I6–P26. In terms of domain architecture, USP spans A39 to G550. The active-site Nucleophile is the C48. A disordered region spans residues L267–S300. The span at P280 to Q289 shows a compositional bias: low complexity. H506 serves as the catalytic Proton acceptor.

Belongs to the peptidase C19 family.

The protein resides in the mitochondrion outer membrane. The enzyme catalyses Thiol-dependent hydrolysis of ester, thioester, amide, peptide and isopeptide bonds formed by the C-terminal Gly of ubiquitin (a 76-residue protein attached to proteins as an intracellular targeting signal).. In terms of biological role, deubiquitinating enzyme that acts as a key inhibitor of mitophagy by counteracting the action of parkin (park). The protein is Ubiquitin carboxyl-terminal hydrolase 30 homolog of Drosophila melanogaster (Fruit fly).